A 393-amino-acid chain; its full sequence is Methylthioribose kinase (393 aa).

Residues N38, K53, and 107-109 each bind ATP; that span reads EDL. Substrate is bound at residue D225. 242–244 is a binding site for ATP; the sequence is DPE. R332 contributes to the substrate binding site.

It belongs to the methylthioribose kinase family. Homodimer.

The catalysed reaction is 5-(methylsulfanyl)-D-ribose + ATP = 5-(methylsulfanyl)-alpha-D-ribose 1-phosphate + ADP + H(+). Its pathway is amino-acid biosynthesis; L-methionine biosynthesis via salvage pathway; S-methyl-5-thio-alpha-D-ribose 1-phosphate from S-methyl-5'-thioadenosine (hydrolase route): step 2/2. Its function is as follows. Catalyzes the phosphorylation of methylthioribose into methylthioribose-1-phosphate. In Bacillus cereus (strain B4264), this protein is Methylthioribose kinase.